The sequence spans 421 residues: 3-hydroxy-3-methylglutaryl-coenzyme A reductase (421 aa).

Active-site charge relay system residues include Glu-109, Lys-240, and Asp-315. His-410 (proton donor) is an active-site residue.

Belongs to the HMG-CoA reductase family.

The catalysed reaction is (R)-mevalonate + 2 NADP(+) + CoA = (3S)-3-hydroxy-3-methylglutaryl-CoA + 2 NADPH + 2 H(+). It participates in metabolic intermediate biosynthesis; (R)-mevalonate biosynthesis; (R)-mevalonate from acetyl-CoA: step 3/3. Functionally, converts HMG-CoA to mevalonate. The sequence is that of 3-hydroxy-3-methylglutaryl-coenzyme A reductase (hmgA) from Aeropyrum pernix (strain ATCC 700893 / DSM 11879 / JCM 9820 / NBRC 100138 / K1).